We begin with the raw amino-acid sequence, 361 residues long: MVGKIAPIAVDAMGGDHAPGAIVQGAVNAARKGLPVVLVGPEARVREELARHRAGSSLPLEVHPATEVVEMHDHPGQAMRRKKDNSIRVCFDLVASGRAAGMVSAGNSGAVMAGAILVLGRPEGVERPAIVSVLPALKGSPLMLDMGAVVDCRPIHLVQFALMGEVFSRRVHGVARPRIAILSNGEEDTKGTDLTRAAAAALRRAPIDFVGYCEGRDLLTGEVDVIVTDGFTGNVALKTMEGTAKVVGEYLKRALRSTTVSKIGGLLSKAALEGMKKRIDWREVGGAPLVGVNGVGFISHGRSDALAIENAIRRAGDAARTHFIDEIARAVAPSHALLEVPANGAAAQQGPTPRRTAPPQT.

Belongs to the PlsX family. As to quaternary structure, homodimer. Probably interacts with PlsY.

Its subcellular location is the cytoplasm. It catalyses the reaction a fatty acyl-[ACP] + phosphate = an acyl phosphate + holo-[ACP]. Its pathway is lipid metabolism; phospholipid metabolism. Functionally, catalyzes the reversible formation of acyl-phosphate (acyl-PO(4)) from acyl-[acyl-carrier-protein] (acyl-ACP). This enzyme utilizes acyl-ACP as fatty acyl donor, but not acyl-CoA. This chain is Phosphate acyltransferase, found in Anaeromyxobacter dehalogenans (strain 2CP-C).